The primary structure comprises 249 residues: Pulmonary surfactant-associated protein A (249 aa).

An N-terminal signal peptide occupies residues 1-20 (MLRWPLALTFLLLAVSGLEC). Positions 28–100 (ASPGIPGTPG…PGERGPPGLP (73 aa)) constitute a Collagen-like domain. The tract at residues 29–102 (SPGIPGTPGS…ERGPPGLPAH (74 aa)) is disordered. Residues P30, P33, P36, P42, P54, P57, P63, and P70 each carry the 4-hydroxyproline modification. Over residues 42 to 51 (PGRDGRDGIK) the composition is skewed to basic and acidic residues. Residues 84 to 93 (ERGEKGEPGE) show a composition bias toward basic and acidic residues. In terms of domain architecture, C-type lectin spans 133–249 (AVGEKVFSTN…QQYRLAICEF (117 aa)). Intrachain disulfides connect C155/C247 and C225/C239. N208 carries an N-linked (GlcNAc...) asparagine glycan. Ca(2+) contacts are provided by E216, R218, N235, and D236.

It belongs to the SFTPA family. As to quaternary structure, oligomeric complex of 6 set of homotrimers.

The protein resides in the secreted. Its subcellular location is the extracellular space. It localises to the extracellular matrix. The protein localises to the surface film. Functionally, in presence of calcium ions, it binds to surfactant phospholipids and contributes to lower the surface tension at the air-liquid interface in the alveoli of the mammalian lung and is essential for normal respiration. Enhances the expression of MYO18A/SP-R210 on alveolar macrophages. This Sus scrofa (Pig) protein is Pulmonary surfactant-associated protein A (SFTPA1).